A 165-amino-acid polypeptide reads, in one-letter code: Transcription elongation factor A protein-like 1 (165 aa).

Residues 1 to 101 are disordered; that stretch reads MENTRSENEE…EQPPCGVGKH (101 aa). Over residues 33–60 the composition is skewed to acidic residues; it reads CSEEDQSSEDLSSEEQSSEEEFFPEELL.

The protein belongs to the TFS-II family. TFA subfamily.

It localises to the nucleus. Its function is as follows. May be involved in transcriptional regulation. Modulates various viral and cellular promoters in a promoter context-dependent manner. Does not bind DNA directly. This Mus musculus (Mouse) protein is Transcription elongation factor A protein-like 1.